The sequence spans 355 residues: Probable butyrate kinase (355 aa).

Belongs to the acetokinase family.

It is found in the cytoplasm. The catalysed reaction is butanoate + ATP = butanoyl phosphate + ADP. This Listeria welshimeri serovar 6b (strain ATCC 35897 / DSM 20650 / CCUG 15529 / CIP 8149 / NCTC 11857 / SLCC 5334 / V8) protein is Probable butyrate kinase.